The following is a 492-amino-acid chain: Malonyl-CoA decarboxylase, mitochondrial (492 aa).

The N-terminal 38 residues, 1 to 38, are a transit peptide targeting the mitochondrion; sequence MRGLGPSLRARRLLPLRYPPRPPGPRGPRLCSGLTASA. Residues 39–189 are alpha-helical domain; the sequence is MDELLRRAVP…VLKSMLSEWF (151 aa). Position 58 is an N6-acetyllysine (Lys58). Lys167 bears the N6-acetyllysine; alternate mark. N6-succinyllysine; alternate is present on Lys167. A catalytic domain region spans residues 190-492; sequence SSGFLNLERV…VAQFQSNSKL (303 aa). Lys210 is subject to N6-acetyllysine. Lys221 carries the post-translational modification N6-succinyllysine. Position 298-304 (298-304) interacts with malonyl-CoA; sequence QGVELGT. Position 316 is an N6-acetyllysine (Lys316). Ser328 serves as a coordination point for malonyl-CoA. Catalysis depends on Ser328, which acts as the Proton acceptor. Lys385 is modified (N6-acetyllysine; alternate). Lys385 is modified (N6-succinyllysine; alternate). Lys388 is modified (N6-acetyllysine). His422 is a binding site for malonyl-CoA. The active-site Proton donor is the His422. 2 positions are modified to N6-acetyllysine: Lys441 and Lys471. A Microbody targeting signal motif is present at residues 490 to 492; sequence SKL.

As to quaternary structure, homotetramer. Dimer of dimers. The two subunits within a dimer display conformational differences suggesting that at any given moment, only one of the two subunits is competent for malonyl-CoA binding and catalytic activity. Under oxidizing conditions, can form disulfide-linked homotetramers (in vitro). Associates with the peroxisomal targeting signal receptor PEX5. Acetylation at Lys-471 activates malonyl-CoA decarboxylase activity. Deacetylation at Lys-471 by SIRT4 represses activity, leading to promote lipogenesis. Post-translationally, interchain disulfide bonds may form in peroxisomes (Potential). Interchain disulfide bonds are not expected to form in the reducing environment of the cytoplasm and mitochondria. In terms of tissue distribution, expressed in liver, heart, skeletal muscles and adipose tissues (at protein level). Ubiquitous. Strongly expressed in liver, kidney, heart, skeletal muscle and adipose tissues. Weakly expressed in brain.

It is found in the cytoplasm. The protein localises to the mitochondrion matrix. Its subcellular location is the peroxisome. The protein resides in the peroxisome matrix. The enzyme catalyses malonyl-CoA + H(+) = acetyl-CoA + CO2. Its pathway is metabolic intermediate biosynthesis; acetyl-CoA biosynthesis; acetyl-CoA from malonyl-CoA: step 1/1. Its activity is regulated as follows. Malonyl-CoA decarboxylase activity does not require any cofactors or divalent metal ions. In terms of biological role, catalyzes the conversion of malonyl-CoA to acetyl-CoA. In the fatty acid biosynthesis MCD selectively removes malonyl-CoA and thus assures that methyl-malonyl-CoA is the only chain elongating substrate for fatty acid synthase and that fatty acids with multiple methyl side chains are produced. In peroxisomes it may be involved in degrading intraperoxisomal malonyl-CoA, which is generated by the peroxisomal beta-oxidation of odd chain-length dicarboxylic fatty acids. Plays a role in the metabolic balance between glucose and lipid oxidation in muscle independent of alterations in insulin signaling. May play a role in controlling the extent of ischemic injury by promoting glucose oxidation. The chain is Malonyl-CoA decarboxylase, mitochondrial from Rattus norvegicus (Rat).